The primary structure comprises 140 residues: RxLR effector protein CRE9 (140 aa).

Positions 1–24 (MRTSVFVALVVATFVATCISFTSA) are cleaved as a signal peptide. The RxLR-dEER signature appears at 43-61 (RTLAEADDWWLASTNTEER). Residues 119–139 (LKILYGALLAGLIIVGVEAML) traverse the membrane as a helical segment.

This sequence belongs to the RxLR effector family.

The protein localises to the secreted. Its subcellular location is the host cell. It is found in the membrane. In terms of biological role, effector that is involved in host plant infection. Contributes to virulence during the early infection stage, by inhibiting plant defense responses induced by both PAMP-triggered immunity (PTI) and effector-triggered immunity (ETI). This Phytophthora infestans (strain T30-4) (Potato late blight agent) protein is RxLR effector protein CRE9.